Consider the following 134-residue polypeptide: Cytochrome c-type biogenesis protein CcmE (134 aa).

Topologically, residues M1–R7 are cytoplasmic. A helical; Signal-anchor for type II membrane protein membrane pass occupies residues L8–K28. Residues L29–L134 lie on the Periplasmic side of the membrane. The heme site is built by H120 and Y124.

It belongs to the CcmE/CycJ family.

It is found in the cell inner membrane. Its function is as follows. Heme chaperone required for the biogenesis of c-type cytochromes. Transiently binds heme delivered by CcmC and transfers the heme to apo-cytochromes in a process facilitated by CcmF and CcmH. The protein is Cytochrome c-type biogenesis protein CcmE of Ehrlichia ruminantium (strain Welgevonden).